We begin with the raw amino-acid sequence, 601 residues long: Glutamine--fructose-6-phosphate aminotransferase [isomerizing] (601 aa).

Cys2 functions as the Nucleophile; for GATase activity in the catalytic mechanism. Residues 2 to 218 enclose the Glutamine amidotransferase type-2 domain; the sequence is CGIVGYIGYD…DHEIVIVKKD (217 aa). SIS domains follow at residues 284–423 and 453–591; these read IIND…EHGR and IATD…VDKP. Lys596 (for Fru-6P isomerization activity) is an active-site residue.

In terms of assembly, homodimer.

The protein localises to the cytoplasm. It carries out the reaction D-fructose 6-phosphate + L-glutamine = D-glucosamine 6-phosphate + L-glutamate. Catalyzes the first step in hexosamine metabolism, converting fructose-6P into glucosamine-6P using glutamine as a nitrogen source. In Staphylococcus aureus (strain MRSA252), this protein is Glutamine--fructose-6-phosphate aminotransferase [isomerizing].